A 312-amino-acid polypeptide reads, in one-letter code: Lipoyl synthase (312 aa).

Positions 1–10 (MNEAPAEKQK) are enriched in basic and acidic residues. The tract at residues 1–20 (MNEAPAEKQKPQQGKRFSER) is disordered. The [4Fe-4S] cluster site is built by Cys-51, Cys-56, Cys-62, Cys-77, Cys-81, Cys-84, and Ser-290. One can recognise a Radical SAM core domain in the interval 63–280 (WSRKTATYLA…RSVGESLGLF (218 aa)).

The protein belongs to the radical SAM superfamily. Lipoyl synthase family. [4Fe-4S] cluster serves as cofactor.

It localises to the cytoplasm. The enzyme catalyses [[Fe-S] cluster scaffold protein carrying a second [4Fe-4S](2+) cluster] + N(6)-octanoyl-L-lysyl-[protein] + 2 oxidized [2Fe-2S]-[ferredoxin] + 2 S-adenosyl-L-methionine + 4 H(+) = [[Fe-S] cluster scaffold protein] + N(6)-[(R)-dihydrolipoyl]-L-lysyl-[protein] + 4 Fe(3+) + 2 hydrogen sulfide + 2 5'-deoxyadenosine + 2 L-methionine + 2 reduced [2Fe-2S]-[ferredoxin]. It participates in protein modification; protein lipoylation via endogenous pathway; protein N(6)-(lipoyl)lysine from octanoyl-[acyl-carrier-protein]: step 2/2. Catalyzes the radical-mediated insertion of two sulfur atoms into the C-6 and C-8 positions of the octanoyl moiety bound to the lipoyl domains of lipoate-dependent enzymes, thereby converting the octanoylated domains into lipoylated derivatives. This Chlamydia felis (strain Fe/C-56) (Chlamydophila felis) protein is Lipoyl synthase.